A 205-amino-acid polypeptide reads, in one-letter code: Protein N-terminal glutamine amidohydrolase (205 aa).

Catalysis depends on residues cysteine 20, histidine 74, and aspartate 90.

It belongs to the NTAQ1 family. In terms of assembly, monomer.

It carries out the reaction N-terminal L-glutaminyl-[protein] + H2O = N-terminal L-glutamyl-[protein] + NH4(+). Functionally, mediates the side-chain deamidation of N-terminal glutamine residues to glutamate, an important step in N-end rule pathway of protein degradation. Conversion of the resulting N-terminal glutamine to glutamate renders the protein susceptible to arginylation, polyubiquitination and degradation as specified by the N-end rule. Does not act on substrates with internal or C-terminal glutamine and does not act on non-glutamine residues in any position. This is Protein N-terminal glutamine amidohydrolase (tun) from Drosophila pseudoobscura pseudoobscura (Fruit fly).